A 177-amino-acid chain; its full sequence is ATP-dependent protease subunit HslV (177 aa).

T4 is a catalytic residue. Positions 159, 162, and 165 each coordinate Na(+).

Belongs to the peptidase T1B family. HslV subfamily. As to quaternary structure, a double ring-shaped homohexamer of HslV is capped on each side by a ring-shaped HslU homohexamer. The assembly of the HslU/HslV complex is dependent on binding of ATP.

The protein localises to the cytoplasm. The enzyme catalyses ATP-dependent cleavage of peptide bonds with broad specificity.. With respect to regulation, allosterically activated by HslU binding. Its function is as follows. Protease subunit of a proteasome-like degradation complex believed to be a general protein degrading machinery. This Mesorhizobium japonicum (strain LMG 29417 / CECT 9101 / MAFF 303099) (Mesorhizobium loti (strain MAFF 303099)) protein is ATP-dependent protease subunit HslV.